Reading from the N-terminus, the 556-residue chain is Dihydroxy-acid dehydratase (556 aa).

Residue C47 coordinates [2Fe-2S] cluster. Position 79 (D79) interacts with Mg(2+). Residue C120 participates in [2Fe-2S] cluster binding. 2 residues coordinate Mg(2+): D121 and K122. An N6-carboxylysine modification is found at K122. Residue C192 coordinates [2Fe-2S] cluster. A Mg(2+)-binding site is contributed by E444. Residue S470 is the Proton acceptor of the active site.

It belongs to the IlvD/Edd family. As to quaternary structure, homodimer. The cofactor is [2Fe-2S] cluster. It depends on Mg(2+) as a cofactor.

The enzyme catalyses (2R)-2,3-dihydroxy-3-methylbutanoate = 3-methyl-2-oxobutanoate + H2O. It carries out the reaction (2R,3R)-2,3-dihydroxy-3-methylpentanoate = (S)-3-methyl-2-oxopentanoate + H2O. Its pathway is amino-acid biosynthesis; L-isoleucine biosynthesis; L-isoleucine from 2-oxobutanoate: step 3/4. It functions in the pathway amino-acid biosynthesis; L-valine biosynthesis; L-valine from pyruvate: step 3/4. Functions in the biosynthesis of branched-chain amino acids. Catalyzes the dehydration of (2R,3R)-2,3-dihydroxy-3-methylpentanoate (2,3-dihydroxy-3-methylvalerate) into 2-oxo-3-methylpentanoate (2-oxo-3-methylvalerate) and of (2R)-2,3-dihydroxy-3-methylbutanoate (2,3-dihydroxyisovalerate) into 2-oxo-3-methylbutanoate (2-oxoisovalerate), the penultimate precursor to L-isoleucine and L-valine, respectively. This chain is Dihydroxy-acid dehydratase, found in Prochlorococcus marinus (strain NATL2A).